Here is a 346-residue protein sequence, read N- to C-terminus: N-acetyl-gamma-glutamyl-phosphate reductase (346 aa).

Residue cysteine 149 is part of the active site.

The protein belongs to the NAGSA dehydrogenase family. Type 1 subfamily.

The protein resides in the cytoplasm. The enzyme catalyses N-acetyl-L-glutamate 5-semialdehyde + phosphate + NADP(+) = N-acetyl-L-glutamyl 5-phosphate + NADPH + H(+). Its pathway is amino-acid biosynthesis; L-arginine biosynthesis; N(2)-acetyl-L-ornithine from L-glutamate: step 3/4. Catalyzes the NADPH-dependent reduction of N-acetyl-5-glutamyl phosphate to yield N-acetyl-L-glutamate 5-semialdehyde. In Micrococcus luteus (strain ATCC 4698 / DSM 20030 / JCM 1464 / CCM 169 / CCUG 5858 / IAM 1056 / NBRC 3333 / NCIMB 9278 / NCTC 2665 / VKM Ac-2230) (Micrococcus lysodeikticus), this protein is N-acetyl-gamma-glutamyl-phosphate reductase.